Reading from the N-terminus, the 445-residue chain is MSNRKYFGTDGIRGRVGNAPITPDFVLKLGWAAGKVLARHGSRKIIIGKDTRISGYMLESALEAGLAAAGLSASFTGPMPTPAVAYLTRTFRAEAGIVISASHNPFYDNGIKFFSIDGTKLPDDVEEAIEAEMEKEITCVDSAELGKASRIVDAAGRYIEFCKGTFPNELSLNGLKVVVDCANGATYHIAPNVLRELGATVIAIGCEPNGVNINEEVGATDVRALQARVLAEKADLGIALDGDGDRVIMVDHEGNKVDGDQIMYIIAREGLRQGQLRGGAVGTLMSNMGLELALKQLGIPFSRAKVGDRYVLEKLQEKGWRIGAENSGHVILLDKTTTGDGIVAGLQVLAAMVRNHMSLHDLCSGMKMFPQILVNVRYTAGSGDPLENEAVKAVTADVEATLGNRGRVLLRKSGTEPLIRVMVEGEDEAQVTAFAHRIADAVKAV.

The Phosphoserine intermediate role is filled by S102. Mg(2+)-binding residues include S102, D241, D243, and D245. S102 bears the Phosphoserine mark.

Belongs to the phosphohexose mutase family. Requires Mg(2+) as cofactor. In terms of processing, activated by phosphorylation.

The catalysed reaction is alpha-D-glucosamine 1-phosphate = D-glucosamine 6-phosphate. Its function is as follows. Catalyzes the conversion of glucosamine-6-phosphate to glucosamine-1-phosphate. This is Phosphoglucosamine mutase from Salmonella choleraesuis (strain SC-B67).